We begin with the raw amino-acid sequence, 559 residues long: Glutamine--tRNA ligase (559 aa).

A 'HIGH' region motif is present at residues proline 44–histidine 54. ATP-binding positions include glutamate 45 to asparagine 47 and histidine 51 to serine 57. Positions 77 and 222 each coordinate L-glutamine. Residues threonine 241 and arginine 272 to leucine 273 contribute to the ATP site. The short motif at leucine 279–arginine 283 is the 'KMSKS' region element.

Belongs to the class-I aminoacyl-tRNA synthetase family. As to quaternary structure, monomer.

It is found in the cytoplasm. It catalyses the reaction tRNA(Gln) + L-glutamine + ATP = L-glutaminyl-tRNA(Gln) + AMP + diphosphate. This Actinobacillus succinogenes (strain ATCC 55618 / DSM 22257 / CCUG 43843 / 130Z) protein is Glutamine--tRNA ligase.